A 156-amino-acid chain; its full sequence is Cyclic pyranopterin monophosphate synthase (156 aa).

Residues 73–75 (LCH) and 110–111 (ME) contribute to the substrate site. Asp-125 is a catalytic residue.

This sequence belongs to the MoaC family. Homohexamer; trimer of dimers.

It catalyses the reaction (8S)-3',8-cyclo-7,8-dihydroguanosine 5'-triphosphate = cyclic pyranopterin phosphate + diphosphate. Its pathway is cofactor biosynthesis; molybdopterin biosynthesis. Its function is as follows. Catalyzes the conversion of (8S)-3',8-cyclo-7,8-dihydroguanosine 5'-triphosphate to cyclic pyranopterin monophosphate (cPMP). This is Cyclic pyranopterin monophosphate synthase from Pseudomonas putida (strain W619).